We begin with the raw amino-acid sequence, 886 residues long: DNA mismatch repair protein MutS (886 aa).

641–648 provides a ligand contact to ATP; the sequence is GPNMAGKS.

It belongs to the DNA mismatch repair MutS family.

In terms of biological role, this protein is involved in the repair of mismatches in DNA. It is possible that it carries out the mismatch recognition step. This protein has a weak ATPase activity. In Rickettsia akari (strain Hartford), this protein is DNA mismatch repair protein MutS.